The sequence spans 38 residues: Photosystem II reaction center protein L (38 aa).

A helical transmembrane segment spans residues 17–37; it reads SLFIGLLLVLVLALLFSSYFF.

Belongs to the PsbL family. In terms of assembly, PSII is composed of 1 copy each of membrane proteins PsbA, PsbB, PsbC, PsbD, PsbE, PsbF, PsbH, PsbI, PsbJ, PsbK, PsbL, PsbM, PsbT, PsbX, PsbY, PsbZ, Psb30/Ycf12, peripheral proteins PsbO, CyanoQ (PsbQ), PsbU, PsbV and a large number of cofactors. It forms dimeric complexes.

It is found in the cellular thylakoid membrane. In terms of biological role, one of the components of the core complex of photosystem II (PSII). PSII is a light-driven water:plastoquinone oxidoreductase that uses light energy to abstract electrons from H(2)O, generating O(2) and a proton gradient subsequently used for ATP formation. It consists of a core antenna complex that captures photons, and an electron transfer chain that converts photonic excitation into a charge separation. This subunit is found at the monomer-monomer interface and is required for correct PSII assembly and/or dimerization. The chain is Photosystem II reaction center protein L from Acaryochloris marina (strain MBIC 11017).